A 428-amino-acid chain; its full sequence is Glutamate-1-semialdehyde 2,1-aminomutase (428 aa).

Position 265 is an N6-(pyridoxal phosphate)lysine (Lys265).

This sequence belongs to the class-III pyridoxal-phosphate-dependent aminotransferase family. HemL subfamily. As to quaternary structure, homodimer. Pyridoxal 5'-phosphate serves as cofactor.

It is found in the cytoplasm. The enzyme catalyses (S)-4-amino-5-oxopentanoate = 5-aminolevulinate. The protein operates within porphyrin-containing compound metabolism; protoporphyrin-IX biosynthesis; 5-aminolevulinate from L-glutamyl-tRNA(Glu): step 2/2. The sequence is that of Glutamate-1-semialdehyde 2,1-aminomutase from Aeromonas hydrophila subsp. hydrophila (strain ATCC 7966 / DSM 30187 / BCRC 13018 / CCUG 14551 / JCM 1027 / KCTC 2358 / NCIMB 9240 / NCTC 8049).